The following is a 294-amino-acid chain: MHNIFKGLITALITPFKDNKLDLYALERIVKHQIKHEVDAVLIAGSTGESSSLSFEEYKLLLQTSVEIVNKCIPIISGCSSNNTTYARALAAESTKIGVDGFMASPPSYVKPTQHGIYKHFEALHEVCNLPIMLYSAPTRSGVDFSDETILRLSKLPRILALKDCGVDLERPLRIRATVKKDFNILTGNDEVVLAFNAQGGVGWTSVASNIVPNICKELLEKWNKNDTKGALEIHQKLLPLYTALFVESNPIPIKYAAHYLGLCENEIRPPLTEASDSAKKQIENIITSLSIKI.

Position 47 (T47) interacts with pyruvate. Y135 acts as the Proton donor/acceptor in catalysis. Residue K163 is the Schiff-base intermediate with substrate of the active site. T205 serves as a coordination point for pyruvate.

The protein belongs to the DapA family. In terms of assembly, homotetramer; dimer of dimers.

The protein localises to the cytoplasm. It catalyses the reaction L-aspartate 4-semialdehyde + pyruvate = (2S,4S)-4-hydroxy-2,3,4,5-tetrahydrodipicolinate + H2O + H(+). The protein operates within amino-acid biosynthesis; L-lysine biosynthesis via DAP pathway; (S)-tetrahydrodipicolinate from L-aspartate: step 3/4. Functionally, catalyzes the condensation of (S)-aspartate-beta-semialdehyde [(S)-ASA] and pyruvate to 4-hydroxy-tetrahydrodipicolinate (HTPA). This is 4-hydroxy-tetrahydrodipicolinate synthase from Rickettsia africae (strain ESF-5).